The sequence spans 354 residues: Fructose-1,6-bisphosphatase class 1 (354 aa).

Mg(2+) is bound by residues Glu112, Asp134, Leu136, and Asp137. Residues Asp137 to Ser140, Asn229, Tyr257, and Lys287 contribute to the substrate site. Residue Glu293 participates in Mg(2+) binding.

The protein belongs to the FBPase class 1 family. As to quaternary structure, homotetramer. It depends on Mg(2+) as a cofactor.

The protein resides in the cytoplasm. The enzyme catalyses beta-D-fructose 1,6-bisphosphate + H2O = beta-D-fructose 6-phosphate + phosphate. It functions in the pathway carbohydrate biosynthesis; Calvin cycle. The sequence is that of Fructose-1,6-bisphosphatase class 1 from Trichodesmium erythraeum (strain IMS101).